The chain runs to 229 residues: Secretory carrier-associated membrane protein 4 (229 aa).

Over 1–39 (MSEKENNFPPLPKFIPVKPCFYQNFSDEIPVEHQVLVKR) the chain is Cytoplasmic. 4 consecutive transmembrane segments (helical) span residues 40-60 (IYRL…ACLA), 61-81 (WWIG…LLLF), 105-125 (FMAF…QAIG), and 149-169 (VVML…AIAI). At 170–229 (MKVHRIYRGAGGSFQKAQTEWNTGTWRNPPSREAQYNNFSGNSLPEYPTVPSYPGSGQWP) the chain is on the cytoplasmic side. Threonine 194 carries the post-translational modification Phosphothreonine. Residues 208 to 229 (FSGNSLPEYPTVPSYPGSGQWP) are disordered.

Belongs to the SCAMP family.

The protein localises to the membrane. Probably involved in membrane protein trafficking. The protein is Secretory carrier-associated membrane protein 4 (SCAMP4) of Pongo abelii (Sumatran orangutan).